Here is a 94-residue protein sequence, read N- to C-terminus: Bacterial microcompartment shell protein PduA (94 aa).

Residues 5 to 89 (ALGMVETKGL…PHTDVEKILP (85 aa)) enclose the BMC domain.

This sequence belongs to the bacterial microcompartments protein family. As to quaternary structure, homohexamer with a central pore of about 5.6 Angstroms in diameter. The hexamers pack against each other in arrays. Interacts with the N-terminus of PduP which targets PduP to the BMC. Modeling suggests PduC, PduD, PduE, PduL and PduP interact with a cleft formed by the C-terminal segments of 2 adjacent PduA subunits (on the BMC luminal side) in the hexamer.

It is found in the bacterial microcompartment. It participates in polyol metabolism; 1,2-propanediol degradation. One of the major shell proteins of the bacterial microcompartment (BMC) dedicated to 1,2-propanediol (1,2-PD) degradation. At least one of PduA or PduJ is required for BMC assembly; it must be encoded as the first gene in the pdu operon. Not required for structural integrity of BMCs, it is required to mitigate propionaldehyde toxicity. Controls diffusion of 1,2-PD into and propionaldehyde out of the BMC shell; residue 40 is particularly important for pore permeability. Overexpression of this protein leads to aberrant filaments that extend the length of the cell, cross the cleavage furrow and impair division. The filaments form nanotubes with a hollow center. The isolated BMC shell component protein ratio for J:A:B':B:K:T:U is approximately 15:10:7:6:1:1:2. Edge residues (particularly Lys-26) are important for function and assembly of the BMC, and influence array formation by hexamers. Interaction with PduA allows encapsulation of at least PduP in BMCs. Probably also targets PduD to the BMC. PduA is probably the hub for binding multiple enzymes to the interior of the BMC; modeling suggests PduC, PduD, PduE, PduG, PduL and PduP are targeted to PduA. Its function is as follows. The 1,2-PD-specific bacterial microcompartment (BMC) concentrates low levels of 1,2-PD catabolic enzymes, concentrates volatile reaction intermediates thus enhancing pathway flux and keeps the level of toxic, mutagenic propionaldehyde low. This chain is Bacterial microcompartment shell protein PduA, found in Salmonella typhimurium (strain LT2 / SGSC1412 / ATCC 700720).